The chain runs to 339 residues: Serpentine receptor class delta-19 (339 aa).

7 helical membrane passes run I2–L22, A39–I59, V90–F110, I130–V150, V187–L207, I242–L262, and S270–V290.

The protein belongs to the nematode receptor-like protein srd family.

Its subcellular location is the membrane. The sequence is that of Serpentine receptor class delta-19 (srd-19) from Caenorhabditis elegans.